Consider the following 898-residue polypeptide: Cip1-interacting zinc finger protein (898 aa).

Disordered stretches follow at residues 48–69 (QAPLPMAVSRGLPPQQPQQPLL), 157–305 (QSLL…ALEA), and 318–471 (VQAQ…QPQV). A compositionally biased stretch (polar residues) spans 170–203 (NPSQFNLSGRNPQKQARTSSSTTPNRKDSSSQTM). The residue at position 209 (Ser-209) is a Phosphoserine. Thr-244 is subject to Phosphothreonine. Positions 263–273 (RSSEEPTEKEP) are enriched in basic and acidic residues. Lys-280 is covalently cross-linked (Glycyl lysine isopeptide (Lys-Gly) (interchain with G-Cter in SUMO2)). Positions 318 to 327 (VQAQVQSQTQ) are enriched in low complexity. A compositionally biased stretch (polar residues) spans 328–351 (PRIPSTDTQVQPKLQKQAQTQTSP). Lys-340 participates in a covalent cross-link: Glycyl lysine isopeptide (Lys-Gly) (interchain with G-Cter in SUMO2). Phosphoserine is present on Ser-350. Residues 355–383 (VLQQKQVQPQLQQEAEPQKQVQPQVQPQA) show a composition bias toward low complexity. Positions 384-395 (HSQGPRQVQLQQ) are enriched in polar residues. Residue Lys-401 forms a Glycyl lysine isopeptide (Lys-Gly) (interchain with G-Cter in SUMO2) linkage. The span at 402–435 (QVQPQVQPQAHSQPPRQVQLQLQKQVQTQTYPQV) shows a compositional bias: low complexity. Residues 436–445 (HTQAQPSVQP) are compositionally biased toward polar residues. At Ser-547 the chain carries Phosphoserine. Residue Lys-549 forms a Glycyl lysine isopeptide (Lys-Gly) (interchain with G-Cter in SUMO2) linkage. The tract at residues 562 to 584 (STVPLTPVPRPSDSVSSTPAATS) is disordered. Phosphothreonine is present on Thr-567. Residues 572 to 584 (PSDSVSSTPAATS) show a composition bias toward low complexity. Glycyl lysine isopeptide (Lys-Gly) (interchain with G-Cter in SUMO2) cross-links involve residues Lys-588, Lys-680, and Lys-705. The segment at 799 to 830 (YICRICHKFYHSNSGAQLSHCKSLGHFENLQK) adopts a Matrin-type zinc-finger fold. Ser-821 is modified (phosphoserine). Lys-830 is covalently cross-linked (Glycyl lysine isopeptide (Lys-Gly) (interchain with G-Cter in SUMO2)). Ser-838 bears the Phosphoserine mark. A compositionally biased stretch (polar residues) spans 859 to 879 (LFTSSGRPPSQPNTQDKTPSK). Positions 859 to 898 (LFTSSGRPPSQPNTQDKTPSKVTARPSQPPLPRRSTRLKT) are disordered. Lys-879 is covalently cross-linked (Glycyl lysine isopeptide (Lys-Gly) (interchain with G-Cter in SUMO2)).

Interacts with CIP/WAF1.

Its subcellular location is the nucleus. Functionally, may regulate the subcellular localization of CIP/WAF1. This Homo sapiens (Human) protein is Cip1-interacting zinc finger protein (CIZ1).